Consider the following 70-residue polypeptide: uncharacterized protein (70 aa).

A helical membrane pass occupies residues 12-32 (VLFMNFFSVFVCTIGTLFLVF).

The protein localises to the membrane. This is an uncharacterized protein from Saccharomyces cerevisiae (strain ATCC 204508 / S288c) (Baker's yeast).